We begin with the raw amino-acid sequence, 432 residues long: uncharacterized protein (432 aa).

Basic residues predominate over residues 1–18; the sequence is MAIGDKRKKNRKNKQNKK. 3 disordered regions span residues 1–23, 37–56, and 122–168; these read MAIG…KNDN, NSNS…NGNG, and STNS…GSSL. 3 stretches are compositionally biased toward low complexity: residues 37 to 53, 122 to 147, and 154 to 168; these read NSNS…NNKN, STNS…QQQQ, and ESQS…GSSL. Residues 181-226 are a coiled coil; it reads LNDQLKIVQLEQKIVNLEKEIQRMRNEQNQIHKQNLNQYHELLKQI. 2 disordered regions span residues 270–290 and 310–432; these read VQPV…KSNG and SSKF…STLR. Residues 274–288 are compositionally biased toward low complexity; it reads STPSSSSNSLASKKS. A compositionally biased stretch (polar residues) spans 311 to 324; sequence SKFAQSNSSPSRVN. Positions 352–378 are enriched in low complexity; that stretch reads KKSATTTTTSSSSNNATTTTAKGSTST. A compositionally biased stretch (polar residues) spans 383 to 414; sequence ITNSNNIKNSVLSPKSITKPNTPSNIIFSPLS.

This is an uncharacterized protein from Dictyostelium discoideum (Social amoeba).